The following is a 245-amino-acid chain: MGRLDGKVIVLSAGAQGIGKAAAIAFAKEGAKVIATDINGEKLKELESYKGIETRVLDVTKKDQIEKLSKEIDRIDVLFNVAGFVHHGSILDCEEADWDFTMNVNVRSMYLMIKTFLPKMLAQKSGNIINMSSVASSIKGVVNRCVYSTSKAAVIGLTKSVAADFIEQGIRCNCICPGTVDTPSLRERIEARPDPEQALKDFLARQKTGRMCTAEEVAHLCVYLASDEAAYVTGNAHIIDGGWSL.

Residues 16–18 (QGI), Asp37, and Asp58 contribute to the NAD(+) site. Arg144 lines the substrate pocket. The active-site Proton acceptor is the Tyr147. Residues Lys151 and 180 to 184 (VDTPS) each bind NAD(+). Substrate-binding residues include Arg188 and Arg205.

The protein belongs to the short-chain dehydrogenases/reductases (SDR) family. Homotetramer.

Its subcellular location is the cytoplasm. It catalyses the reaction cis-4-hydroxy-L-proline + NAD(+) = 4-oxo-L-proline + NADH + H(+). The enzyme catalyses (R)-3-hydroxybutanoate + NAD(+) = acetoacetate + NADH + H(+). Its pathway is amino-acid metabolism. The protein operates within siderophore biosynthesis. In terms of biological role, NAD(H)-dependent dehydrogenase/reductase with a preference for cyclic substrates. Catalyzes stereoselective conversion of 4-oxo-L-proline to cis-4-hydroxy-L-proline, likely a detoxification mechanism for ketoprolines. Mediates the formation of 2,5-dihydroxybenzoate (2,5-DHBA), a siderophore that chelates free cytoplasmic iron, thereby regulating iron transport and homeostasis while protecting cells against free radical-induced oxidative stress. The iron-siderophore complex is imported into mitochondria, providing an iron source for mitochondrial metabolic processes in particular heme synthesis. May act as a 3-hydroxybutyrate dehydrogenase. The polypeptide is Dehydrogenase/reductase SDR family member 6 (bdh2) (Aquarana catesbeiana (American bullfrog)).